The following is a 494-amino-acid chain: E3 ubiquitin-protein ligase ari-1.1 (494 aa).

Residues 1–30 (MSSDDEINMDDSDSSQGEIDDGCMSDDDGI) are compositionally biased toward acidic residues. The interval 1-52 (MSSDDEINMDDSDSSQGEIDDGCMSDDDGIVLESREQNSSDYKDNGEPDNEV) is disordered. Residues 33-52 (ESREQNSSDYKDNGEPDNEV) show a composition bias toward basic and acidic residues. The segment at 124–331 (GDAECDICCS…SSWYSCNRFD (208 aa)) is TRIAD supradomain. 18 residues coordinate Zn(2+): Cys128, Cys131, Cys142, His144, Cys147, Cys150, Cys169, Cys174, Cys214, Cys219, Cys235, Cys237, Cys242, Cys245, His250, Cys255, Cys282, and Cys285. The RING-type 1 zinc-finger motif lies at 128–174 (CDICCSLGELSGLSCNHRACTQCWKAYLTNKIANNAQSEIECMAPNC). The IBR-type zinc finger occupies 194–255 (ATYRKLIVAS…GHDWHEPVNC (62 aa)). The RING-type 2; atypical zinc finger occupies 282–313 (CPKCMITIEKDGGCNHMTCKNTACRFEFCWMC). The active site involves Cys295. Positions 300, 305, 310, 313, 320, and 327 each coordinate Zn(2+). Positions 346 to 494 (RANLQRYLFY…ADQELWVFNE (149 aa)) are ariadne domain.

It belongs to the RBR family. Ariadne subfamily. Interacts with ubiquitin-conjugating enzyme E2 ubc-18.

Its subcellular location is the nucleus. It localises to the cytoplasm. The catalysed reaction is [E2 ubiquitin-conjugating enzyme]-S-ubiquitinyl-L-cysteine + [acceptor protein]-L-lysine = [E2 ubiquitin-conjugating enzyme]-L-cysteine + [acceptor protein]-N(6)-ubiquitinyl-L-lysine.. With respect to regulation, autoinhibited by the ariadne domain, which masks the second RING-type zinc finger that contains the active site and inhibits the E3 activity. In terms of biological role, E3 ubiquitin-protein transferase, which catalyzes ubiquitination of target proteins together with ubiquitin-conjugating enzyme E2 ubc-18. Acts with ubc-18 to regulate pharyngeal development. This Caenorhabditis elegans protein is E3 ubiquitin-protein ligase ari-1.1.